A 551-amino-acid polypeptide reads, in one-letter code: Putative transport protein CGSHiEE_03135 (551 aa).

5 helical membrane passes run 4 to 24 (IAITISLLALVAVIGLWIGHW), 28 to 48 (GVGLGIGGVLFGGIIVAHFTD), 65 to 85 (FGLILFVYTIGIQVGPGFFSS), 95 to 115 (AFAILIIVLGSIAVVLVHKIA), and 157 to 177 (VSYAMAYPFGICGILLAMWLI). 2 RCK C-terminal domains span residues 191–275 (RFNA…IIGY) and 277–360 (VDAP…VIGN). The next 6 helical transmembrane spans lie at 370-390 (MLPVFIGIGLGVLVGSIPFYI), 402-424 (AGGPLVVVLILARIGTIGKLYWF), 438-458 (IVLFLAVVGLKSGGSFFDTLV), 463-483 (LEWMGYGIFITFVPLIIAGTI), 492-512 (YLTICGLLAGSMTDPPALAFA), and 529-549 (VYPLVMFLRIMSPQLLAVLLW).

It belongs to the AAE transporter (TC 2.A.81) family. YidE subfamily.

The protein localises to the cell membrane. This Haemophilus influenzae (strain PittEE) protein is Putative transport protein CGSHiEE_03135.